Consider the following 307-residue polypeptide: Protoheme IX farnesyltransferase (307 aa).

Transmembrane regions (helical) follow at residues 32–52 (MGIV…ALHF), 65–85 (FFTI…NNYI), 108–128 (PGFA…FLLL), 131–151 (PMAV…YSLW), 158–178 (LNTV…WAAI), 186–206 (IAWM…LALA), 251–271 (LGIT…VLGF), and 287–307 (FVYS…VTFF).

Belongs to the UbiA prenyltransferase family. Protoheme IX farnesyltransferase subfamily. In terms of assembly, interacts with CtaA.

The protein resides in the cell membrane. The catalysed reaction is heme b + (2E,6E)-farnesyl diphosphate + H2O = Fe(II)-heme o + diphosphate. Its pathway is porphyrin-containing compound metabolism; heme O biosynthesis; heme O from protoheme: step 1/1. Its function is as follows. Converts heme B (protoheme IX) to heme O by substitution of the vinyl group on carbon 2 of heme B porphyrin ring with a hydroxyethyl farnesyl side group. The sequence is that of Protoheme IX farnesyltransferase from Bacillus cereus (strain G9842).